Here is an 879-residue protein sequence, read N- to C-terminus: MAKIIDARLRDNVHLLGELLGNTIRAQHGDQFFDKIERIRKGAKAARKGSAEGAQLLAETLDSLDESELLPMTRAFNQFLNLANIAEQYHQVRRRAAGEPAPFEIGVFADLIERLKAAGHDNEFIARQVSRLEIELVLTAHPTEVSRRTLIQKYDAIAQQLAARDHTDLSDAERASIELSLQRLIAEVWHTEEIRRNRPTPVEEAKWGFAAIENSLWKAVPNVLRQTDATLHRLTGLHLPLEAAPIRFASWMGGDRDGNPNVTAMVSREVLLTARWVAADLYLREIEGLITALSMREASDELLRQSGDSAEPYRVLLKPLRQRLRATREWARAAIEHGQPAPAEVLQDCAELRRPLELCYRSLHACGMGVIADGALLDCLRRLAVFGLFLVRLDIRQDAARHAAALAEITDYLGLGDYQQWDEQKRLDWLQHELANRRPLLPAHYHPSADTAEVLATCAVIAEAPAASLGSYVISMAHAASDVLAVQLLLKEAGLQRPMRVVPLFETLDDLNNAAPTIDRLLSLPGYRQRLHGPQEVMIGYSDSAKDAGTTAAAWAQYRAQEQLVEVCREHGVELLLFHGRGGTVGRGGGPAHAAILSQPPGSVAGRFRTTEQGEMIRFKFGLPDIAEQNLNLYLAAVLEATLLPPPPPEPGWRETMDRLAAEGVAAYRGVVREHPLFVDYFRQATPELELGRLPLGSRPAKRREGGVESLRAIPWIFAWTQTRLMLPAWLGWEQALHGALQRGEGERLAEMRARWPFFSTRIDMLEMVLAKADADIARRYDERLVQPELLSLGSDLRDRLSQVIEAVLSLTGQSDLLDHSPKTQEAFSLRNTYLDPLHLMQIELLARSRQRQGPAESPLEQALLVSVAGIAAGLRNTG.

Residues His141 and Lys546 contribute to the active site.

It belongs to the PEPCase type 1 family. It depends on Mg(2+) as a cofactor.

It catalyses the reaction oxaloacetate + phosphate = phosphoenolpyruvate + hydrogencarbonate. Functionally, forms oxaloacetate, a four-carbon dicarboxylic acid source for the tricarboxylic acid cycle. The sequence is that of Phosphoenolpyruvate carboxylase from Stutzerimonas stutzeri (strain A1501) (Pseudomonas stutzeri).